The following is a 248-amino-acid chain: UPF0173 metal-dependent hydrolase Hlac_1347 (248 aa).

It belongs to the UPF0173 family.

This is UPF0173 metal-dependent hydrolase Hlac_1347 from Halorubrum lacusprofundi (strain ATCC 49239 / DSM 5036 / JCM 8891 / ACAM 34).